Reading from the N-terminus, the 689-residue chain is Protein arginine N-methyltransferase 7 (689 aa).

SAM-dependent MTase PRMT-type domains lie at 14 to 344 (SLEW…YSVW) and 359 to 685 (DARV…IAMD). Residues Glu-144 and Glu-153 contribute to the active site.

It belongs to the class I-like SAM-binding methyltransferase superfamily. Protein arginine N-methyltransferase family. PRMT7 subfamily.

It localises to the cytoplasm. It is found in the cytosol. The protein localises to the nucleus. It catalyses the reaction L-arginyl-[protein] + S-adenosyl-L-methionine = N(omega)-methyl-L-arginyl-[protein] + S-adenosyl-L-homocysteine + H(+). Arginine methyltransferase that can both catalyze the formation of omega-N monomethylarginine (MMA) and symmetrical dimethylarginine (sDMA), with a preference for the formation of MMA. Specifically mediates the symmetrical dimethylation of arginine residues in the small nuclear ribonucleoproteins Sm D1 (SNRPD1) and Sm D3 (SNRPD3); such methylation being required for the assembly and biogenesis of snRNP core particles. Specifically mediates the symmetric dimethylation of histone H4 'Arg-3' to form H4R3me2s. Plays a role in gene imprinting by being recruited by CTCFL at the H19 imprinted control region (ICR) and methylating histone H4 to form H4R3me2s, possibly leading to recruit DNA methyltransferases at these sites. May also play a role in embryonic stem cell (ESC) pluripotency. Also able to mediate the arginine methylation of histone H2A and myelin basic protein (MBP) in vitro; the relevance of such results is however unclear in vivo. The chain is Protein arginine N-methyltransferase 7 (PRMT7) from Gallus gallus (Chicken).